A 165-amino-acid polypeptide reads, in one-letter code: Large ribosomal subunit protein uL5 (165 aa).

Belongs to the universal ribosomal protein uL5 family. As to quaternary structure, part of the 50S ribosomal subunit; contacts the 5S rRNA and probably tRNA. Forms a bridge to the 30S subunit in the 70S ribosome.

Functionally, this is one of the proteins that bind and probably mediate the attachment of the 5S RNA into the large ribosomal subunit, where it forms part of the central protuberance. In the 70S ribosome it contacts protein S13 of the 30S subunit (bridge B1b), connecting the 2 subunits; this bridge is implicated in subunit movement. May contact the P site tRNA; the 5S rRNA and some of its associated proteins might help stabilize positioning of ribosome-bound tRNAs. The polypeptide is Large ribosomal subunit protein uL5 (Methanoregula boonei (strain DSM 21154 / JCM 14090 / 6A8)).